Consider the following 274-residue polypeptide: uncharacterized protein (274 aa).

Positions Met1–His20 are enriched in basic and acidic residues. 3 disordered regions span residues Met1 to Asp63, Asn148 to Asp217, and Ala230 to Val274. Residues Lys21 to Arg44 show a composition bias toward basic residues. Residues Ala45–Asp63 are compositionally biased toward basic and acidic residues. Residues Phe85–Pro161 form the RRM domain. The segment covering Asn148–Ser160 has biased composition (polar residues). Low complexity-rich tracts occupy residues Ser181–Arg190 and Arg200–Ile211. The segment covering Ala230–Ile245 has biased composition (polar residues). Residues Leu263 to Val274 are compositionally biased toward acidic residues.

This is an uncharacterized protein from Schizosaccharomyces pombe (strain 972 / ATCC 24843) (Fission yeast).